A 396-amino-acid polypeptide reads, in one-letter code: Chalcone synthase A (396 aa).

C170 is an active-site residue.

Belongs to the thiolase-like superfamily. Chalcone/stilbene synthases family.

The catalysed reaction is (E)-4-coumaroyl-CoA + 3 malonyl-CoA + 3 H(+) = 2',4,4',6'-tetrahydroxychalcone + 3 CO2 + 4 CoA. The protein operates within secondary metabolite biosynthesis; flavonoid biosynthesis. Functionally, the primary product of this enzyme is 4,2',4',6'-tetrahydroxychalcone (also termed naringenin-chalcone or chalcone) which can under specific conditions spontaneously isomerize into naringenin. This is Chalcone synthase A (CHSA) from Ipomoea purpurea (Common morning glory).